The sequence spans 345 residues: Erythronate-4-phosphate dehydrogenase (345 aa).

Ser-45 is a binding site for substrate. NAD(+) contacts are provided by Asp-146 and Thr-174. Arg-207 is a catalytic residue. Residue Asp-227 coordinates NAD(+). Glu-232 is a catalytic residue. His-249 (proton donor) is an active-site residue. Gly-252 contributes to the NAD(+) binding site.

This sequence belongs to the D-isomer specific 2-hydroxyacid dehydrogenase family. PdxB subfamily. Homodimer.

The protein localises to the cytoplasm. The catalysed reaction is 4-phospho-D-erythronate + NAD(+) = (R)-3-hydroxy-2-oxo-4-phosphooxybutanoate + NADH + H(+). Its pathway is cofactor biosynthesis; pyridoxine 5'-phosphate biosynthesis; pyridoxine 5'-phosphate from D-erythrose 4-phosphate: step 2/5. In terms of biological role, catalyzes the oxidation of erythronate-4-phosphate to 3-hydroxy-2-oxo-4-phosphonooxybutanoate. The protein is Erythronate-4-phosphate dehydrogenase of Ruthia magnifica subsp. Calyptogena magnifica.